The chain runs to 94 residues: uncharacterized protein (94 aa).

This sequence to M.tuberculosis Rv2632c.

This is an uncharacterized protein from Mycobacterium tuberculosis (strain CDC 1551 / Oshkosh).